Consider the following 673-residue polypeptide: eEF1A lysine and N-terminal methyltransferase homolog (673 aa).

This sequence belongs to the methyltransferase superfamily.

The catalysed reaction is L-lysyl-[protein] + S-adenosyl-L-methionine = N(6)-methyl-L-lysyl-[protein] + S-adenosyl-L-homocysteine + H(+). The enzyme catalyses N(6)-methyl-L-lysyl-[protein] + S-adenosyl-L-methionine = N(6),N(6)-dimethyl-L-lysyl-[protein] + S-adenosyl-L-homocysteine + H(+). It carries out the reaction N-terminal glycyl-L-lysyl-L-glutamyl-[protein] + 3 S-adenosyl-L-methionine = N-terminal N,N,N-trimethyl-glycyl-L-lysyl-L-glutamyl-[protein] + 3 S-adenosyl-L-homocysteine + 3 H(+). Functionally, dual methyltransferase. It catalyzes N-terminal methylation of target proteins via its C-terminus. It catalyzes dimethylation on lysine residues of target proteins via its N-terminus. In Drosophila melanogaster (Fruit fly), this protein is eEF1A lysine and N-terminal methyltransferase homolog.